The sequence spans 71 residues: Small ribosomal subunit protein eS31 (71 aa).

4 residues coordinate Zn(2+): C35, C38, C53, and C56. Residues 35 to 56 (CPKCGAGVFMAEHLNRYACGKC) form a C4-type zinc finger.

The protein belongs to the eukaryotic ribosomal protein eS31 family. As to quaternary structure, part of the 30S ribosomal subunit. It depends on Zn(2+) as a cofactor.

The sequence is that of Small ribosomal subunit protein eS31 from Methanococcus vannielii (strain ATCC 35089 / DSM 1224 / JCM 13029 / OCM 148 / SB).